The primary structure comprises 176 residues: Tubulin polymerization-promoting protein family member 3 (176 aa).

Residues 132 to 151 (TGSHKERFDQTGKGKGKSGR) are disordered. Basic and acidic residues predominate over residues 134-151 (SHKERFDQTGKGKGKSGR).

The protein belongs to the TPPP family.

The protein localises to the cytoplasm. The protein resides in the cytoskeleton. Functionally, regulator of microtubule dynamic that has microtubule bundling activity. The protein is Tubulin polymerization-promoting protein family member 3 (tppp3) of Xenopus laevis (African clawed frog).